The following is a 348-amino-acid chain: Tocopherol O-methyltransferase, chloroplastic (348 aa).

Residues 1 to 51 constitute a chloroplast transit peptide; sequence MKATLAAPSSLTSLPYRTNSSFGSKSSLLFRSPSSSSSVSMTTTRGNVAVA. The residue at position 52 (A52) is an N-acetylalanine. Positions 130–139 are SAM motif I; that stretch reads VVDVGCGIGG. The tract at residues 193–201 is SAM motif II; the sequence is GKFDLVWSM. The SAM motif III stretch occupies residues 220–229; sequence VAAPGGRIII.

It belongs to the class I-like SAM-binding methyltransferase superfamily. gTMT family.

It is found in the plastid. It localises to the chloroplast. The enzyme catalyses gamma-tocopherol + S-adenosyl-L-methionine = (+)-alpha-tocopherol + S-adenosyl-L-homocysteine + H(+). It carries out the reaction delta-tocotrienol + S-adenosyl-L-methionine = beta-tocotrienol + S-adenosyl-L-homocysteine + H(+). The catalysed reaction is gamma-tocotrienol + S-adenosyl-L-methionine = alpha-tocotrienol + S-adenosyl-L-homocysteine + H(+). It catalyses the reaction delta-tocopherol + S-adenosyl-L-methionine = beta-tocopherol + S-adenosyl-L-homocysteine + H(+). It functions in the pathway cofactor biosynthesis; tocopherol biosynthesis. Involved in the synthesis of tocopherol (vitamin E). Methylates gamma- and delta-tocopherol to form beta- and alpha-tocopherol, respectively. The sequence is that of Tocopherol O-methyltransferase, chloroplastic (VTE4) from Arabidopsis thaliana (Mouse-ear cress).